The chain runs to 339 residues: Dihydroorotase (339 aa).

H12 and H14 together coordinate Zn(2+). Substrate contacts are provided by residues 14–16 and N40; that span reads HVR. Zn(2+) contacts are provided by K94, H133, H167, and D239. K94 is subject to N6-carboxylysine. H133 lines the substrate pocket. D239 is an active-site residue. Residues H243 and A255 each coordinate substrate.

It belongs to the metallo-dependent hydrolases superfamily. DHOase family. Class II DHOase subfamily. As to quaternary structure, homodimer. The cofactor is Zn(2+).

The catalysed reaction is (S)-dihydroorotate + H2O = N-carbamoyl-L-aspartate + H(+). It functions in the pathway pyrimidine metabolism; UMP biosynthesis via de novo pathway; (S)-dihydroorotate from bicarbonate: step 3/3. Its function is as follows. Catalyzes the reversible cyclization of carbamoyl aspartate to dihydroorotate. This Helicobacter acinonychis (strain Sheeba) protein is Dihydroorotase.